Consider the following 435-residue polypeptide: Ribosomal protein uS12 methylthiotransferase RimO (435 aa).

The MTTase N-terminal domain maps to 3 to 113; the sequence is HKVGFVSLGC…VVNAVHQHLP (111 aa). [4Fe-4S] cluster-binding residues include Cys-12, Cys-48, Cys-77, Cys-144, Cys-148, and Cys-151. The Radical SAM core domain maps to 130–367; it reads LTPRHYAYLK…MQVQAEISRN (238 aa). Residues 370–435 enclose the TRAM domain; the sequence is KNKIGSTQTV…DDYDLYASLV (66 aa).

This sequence belongs to the methylthiotransferase family. RimO subfamily. Requires [4Fe-4S] cluster as cofactor.

The protein localises to the cytoplasm. It carries out the reaction L-aspartate(89)-[ribosomal protein uS12]-hydrogen + (sulfur carrier)-SH + AH2 + 2 S-adenosyl-L-methionine = 3-methylsulfanyl-L-aspartate(89)-[ribosomal protein uS12]-hydrogen + (sulfur carrier)-H + 5'-deoxyadenosine + L-methionine + A + S-adenosyl-L-homocysteine + 2 H(+). Catalyzes the methylthiolation of an aspartic acid residue of ribosomal protein uS12. The polypeptide is Ribosomal protein uS12 methylthiotransferase RimO (Legionella pneumophila (strain Lens)).